The chain runs to 405 residues: Phosphoglycerate kinase (405 aa).

Substrate-binding positions include 21-23, R38, 59-62, R116, and R156; these read DFN and HQSR. Residues E330 and 355-358 contribute to the ATP site; that span reads GGHT.

This sequence belongs to the phosphoglycerate kinase family. Monomer.

The protein localises to the cytoplasm. It carries out the reaction (2R)-3-phosphoglycerate + ATP = (2R)-3-phospho-glyceroyl phosphate + ADP. Its pathway is carbohydrate degradation; glycolysis; pyruvate from D-glyceraldehyde 3-phosphate: step 2/5. In Methanocorpusculum labreanum (strain ATCC 43576 / DSM 4855 / Z), this protein is Phosphoglycerate kinase.